Consider the following 75-residue polypeptide: Sec-independent protein translocase protein TatA (75 aa).

The chain crosses the membrane as a helical span at residues 1–21; it reads MGSMSIWHWIVVLAVVLLLFG. The disordered stretch occupies residues 43-75; it reads MAEDDDAPAKPAEPPRAVPHQATPAPESEKKAV.

It belongs to the TatA/E family. In terms of assembly, the Tat system comprises two distinct complexes: a TatABC complex, containing multiple copies of TatA, TatB and TatC subunits, and a separate TatA complex, containing only TatA subunits. Substrates initially bind to the TatABC complex, which probably triggers association of the separate TatA complex to form the active translocon.

It localises to the cell inner membrane. Functionally, part of the twin-arginine translocation (Tat) system that transports large folded proteins containing a characteristic twin-arginine motif in their signal peptide across membranes. TatA could form the protein-conducting channel of the Tat system. In Azorhizobium caulinodans (strain ATCC 43989 / DSM 5975 / JCM 20966 / LMG 6465 / NBRC 14845 / NCIMB 13405 / ORS 571), this protein is Sec-independent protein translocase protein TatA.